Consider the following 173-residue polypeptide: MSNKASDQSARTASILKTDITRENTITRSSSSNNDNYHHHNNINNYNESAKTGEDANKENIPNLEEEIAAFRIFRKKSTSNLKSSHTTSNLVKKTMFKRDLLKQDPKRKLQLQQRFASPTDRLVSPCSLKLNEHKVKMFGKKKKVNPMKLNFKGNLAADSEDVEIDEDEEYFY.

The segment covering 1 to 12 has biased composition (polar residues); it reads MSNKASDQSART. Positions 1–56 are disordered; that stretch reads MSNKASDQSARTASILKTDITRENTITRSSSSNNDNYHHHNNINNYNESAKTGEDA. Ser-2 carries the N-acetylserine modification. Residues Ser-118 and Ser-125 each carry the phosphoserine modification. The interval 159 to 173 is negative-charged tail; it reads DSEDVEIDEDEEYFY.

Its function is as follows. It is required for meiosis I chromosome division during sporulation. A component of the FEAR (CDC14 early anaphase release) network which promotes CDC14 release from the nucleolus during early anaphase. The polypeptide is Sporulation-specific protein 12 (SPO12) (Saccharomyces cerevisiae (strain ATCC 204508 / S288c) (Baker's yeast)).